Reading from the N-terminus, the 248-residue chain is Exosome complex component Rrp41 (248 aa).

Belongs to the RNase PH family. Rrp41 subfamily. As to quaternary structure, component of the archaeal exosome complex. Forms a hexameric ring-like arrangement composed of 3 Rrp41-Rrp42 heterodimers. The hexameric ring associates with a trimer of Rrp4 and/or Csl4 subunits.

The protein resides in the cytoplasm. Functionally, catalytic component of the exosome, which is a complex involved in RNA degradation. Has 3'-&gt;5' exoribonuclease activity. Can also synthesize heteromeric RNA-tails. Binds RNA. The protein is Exosome complex component Rrp41 of Saccharolobus solfataricus (strain ATCC 35092 / DSM 1617 / JCM 11322 / P2) (Sulfolobus solfataricus).